A 473-amino-acid polypeptide reads, in one-letter code: MKTDTPSLETPQAARLRRRQLIRQLLERDKTPLAILFMAAVVGTLVGLAAVAFDKGVAWLQNQRMGALVHTADNYPLLLTVAFLCSAVLAMFGYFLVRKYAPEAGGSGIPEIEGALEDQRPVRWWRVLPVKFFGGLGTLGGGMGLGREGPTVQIGGNISRMVLDIFRLKGDEARHTLLATGAAAGLAAAFNAPLAGILFIIEEMRPQFRYTLISIKAVFIGVIMSTIMYRIFNHEVALIDVGKLSDAPLNTLWLYLILGIIFGIFGPIFNKWVLGMQDLLHRVHGGNITKWVLMGGAIGGLCGLLGFVAPATSGGGFNLIPIATAGNFSMGMLVFIFVARVITTLLCFSSGAPGGIFAPMLALGTVLGTAFGMVAVELFPQYHLEAGTFAIAGMGALLAASIRAPLTGIILVLEMTDNYQLILPMIITGLGATLLAQFTGGKPLYSAILARTLAKQEAEQLARSKAASASENT.

At 1-32 the chain is on the cytoplasmic side; it reads MKTDTPSLETPQAARLRRRQLIRQLLERDKTP. The chain crosses the membrane as a helical span at residues 33–69; it reads LAILFMAAVVGTLVGLAAVAFDKGVAWLQNQRMGALV. Over 70-76 the chain is Periplasmic; the sequence is HTADNYP. Residues 77-100 traverse the membrane as a helical segment; sequence LLLTVAFLCSAVLAMFGYFLVRKY. The Selectivity filter part_1 signature appears at 106-110; the sequence is GSGIP. A chloride-binding site is contributed by serine 107. Positions 109-116 form an intramembrane region, helical; that stretch reads IPEIEGAL. Residues 117–123 lie on the Cytoplasmic side of the membrane; it reads EDQRPVR. Helical transmembrane passes span 124–141 and 148–166; these read WWRVLPVKFFGGLGTLGG and EGPTVQIGGNISRMVLDIF. Positions 146–150 match the Selectivity filter part_2 motif; it reads GREGP. The Cytoplasmic segment spans residues 167 to 176; the sequence is RLKGDEARHT. 2 intramembrane regions (helical) span residues 177 to 189 and 193 to 201; these read LLATGAAAGLAAA and PLAGILFII. Topologically, residues 202 to 214 are cytoplasmic; the sequence is EEMRPQFRYTLIS. A helical membrane pass occupies residues 215 to 232; the sequence is IKAVFIGVIMSTIMYRIF. Over 233–252 the chain is Periplasmic; that stretch reads NHEVALIDVGKLSDAPLNTL. The chain crosses the membrane as a helical span at residues 253–281; sequence WLYLILGIIFGIFGPIFNKWVLGMQDLLH. Topologically, residues 282 to 287 are cytoplasmic; it reads RVHGGN. The helical transmembrane segment at 288–309 threads the bilayer; it reads ITKWVLMGGAIGGLCGLLGFVA. The Periplasmic segment spans residues 310–329; the sequence is PATSGGGFNLIPIATAGNFS. 2 consecutive transmembrane segments (helical) span residues 330 to 349 and 355 to 376; these read MGMLVFIFVARVITTLLCFS and GIFAPMLALGTVLGTAFGMVAV. The Selectivity filter part_3 signature appears at 355 to 359; sequence GIFAP. Chloride is bound by residues isoleucine 356 and phenylalanine 357. Topologically, residues 377-386 are periplasmic; it reads ELFPQYHLEA. Positions 387-401 form an intramembrane region, helical; sequence GTFAIAGMGALLAAS. Residues 402–404 constitute an intramembrane region (note=Loop between two helices); sequence IRA. An intramembrane region (helical) is located at residues 405–416; the sequence is PLTGIILVLEMT. Positions 417–421 form an intramembrane region, note=Loop between two helices; sequence DNYQL. A helical transmembrane segment spans residues 422–438; it reads ILPMIITGLGATLLAQF. Over 439–473 the chain is Cytoplasmic; that stretch reads TGGKPLYSAILARTLAKQEAEQLARSKAASASENT. Residue tyrosine 445 coordinates chloride.

Belongs to the chloride channel (TC 2.A.49) family. ClcA subfamily. As to quaternary structure, homodimer.

The protein localises to the cell inner membrane. The catalysed reaction is 2 chloride(in) + H(+)(out) = 2 chloride(out) + H(+)(in). In terms of biological role, proton-coupled chloride transporter. Functions as antiport system and exchanges two chloride ions for 1 proton. Probably acts as an electrical shunt for an outwardly-directed proton pump that is linked to amino acid decarboxylation, as part of the extreme acid resistance (XAR) response. This Shigella flexneri serotype 5b (strain 8401) protein is H(+)/Cl(-) exchange transporter ClcA.